Consider the following 121-residue polypeptide: Peptidyl-tRNA hydrolase (121 aa).

This sequence belongs to the PTH2 family.

Its subcellular location is the cytoplasm. The catalysed reaction is an N-acyl-L-alpha-aminoacyl-tRNA + H2O = an N-acyl-L-amino acid + a tRNA + H(+). Its function is as follows. The natural substrate for this enzyme may be peptidyl-tRNAs which drop off the ribosome during protein synthesis. This chain is Peptidyl-tRNA hydrolase, found in Sulfurisphaera tokodaii (strain DSM 16993 / JCM 10545 / NBRC 100140 / 7) (Sulfolobus tokodaii).